The sequence spans 180 residues: Lysine-specific demethylase 5C (180 aa).

The interval 116–159 is disordered; sequence PEESLAYSSDAGEGAGHIPKVQGLLENGDSVTSPEKVATEEGSG. Serine 148 is modified (phosphoserine).

This sequence belongs to the JARID1 histone demethylase family. Part of two distinct complexes, one containing E2F6, and the other containing REST. Interacts with ZMYND8. The cofactor is Fe(2+).

It is found in the nucleus. It carries out the reaction N(6),N(6),N(6)-trimethyl-L-lysyl(4)-[histone H3] + 3 2-oxoglutarate + 3 O2 = L-lysyl(4)-[histone H3] + 3 formaldehyde + 3 succinate + 3 CO2. In terms of biological role, histone demethylase that specifically demethylates 'Lys-4' of histone H3, thereby playing a central role in histone code. Does not demethylate histone H3 'Lys-9', H3 'Lys-27', H3 'Lys-36', H3 'Lys-79' or H4 'Lys-20'. Demethylates trimethylated and dimethylated but not monomethylated H3 'Lys-4'. Participates in transcriptional repression of neuronal genes by recruiting histone deacetylases and REST at neuron-restrictive silencer elements. Represses the CLOCK-BMAL1 heterodimer-mediated transcriptional activation of the core clock component PER2. In Cricetulus griseus (Chinese hamster), this protein is Lysine-specific demethylase 5C (KDM5C).